A 28-amino-acid chain; its full sequence is GLKDWWNKHKDKIVEVVKDSGKAGLNAA.

An Alanine amide modification is found at A28.

As to expression, expressed by the venom gland.

It localises to the secreted. In terms of biological role, the synthetic peptide has weak antimicrobial activity against Gram-negative bacterium E.coli ATCC 10536. It does not show antimicrobial activity against the Gram-positive bacteria B.amyloliquefacies S499, L.monocytogenes 2231 and S.aureus ATCC 29213, against the Gram-negative bacteria P.putida BTP1 and P.aeruginosa PaO1, or against the fungi S.cerevisiae, R.mucilaginosa, C.cucumerinum, F.oxysporum and B.cinerea. This is M-poneritoxin-Dq4a from Dinoponera quadriceps (South American ant).